A 602-amino-acid chain; its full sequence is Elongation factor 4 (602 aa).

The tr-type G domain maps to 7 to 189 (KFIRNFSIIA…QLVVAIPPPV (183 aa)). GTP contacts are provided by residues 19–24 (DHGKST) and 136–139 (NKID).

This sequence belongs to the TRAFAC class translation factor GTPase superfamily. Classic translation factor GTPase family. LepA subfamily.

Its subcellular location is the cell inner membrane. The enzyme catalyses GTP + H2O = GDP + phosphate + H(+). Required for accurate and efficient protein synthesis under certain stress conditions. May act as a fidelity factor of the translation reaction, by catalyzing a one-codon backward translocation of tRNAs on improperly translocated ribosomes. Back-translocation proceeds from a post-translocation (POST) complex to a pre-translocation (PRE) complex, thus giving elongation factor G a second chance to translocate the tRNAs correctly. Binds to ribosomes in a GTP-dependent manner. This Coxiella burnetii (strain Dugway 5J108-111) protein is Elongation factor 4.